The following is a 243-amino-acid chain: Methylthioribulose-1-phosphate dehydratase (243 aa).

The interval 1-22 (MCPADQTVATNNNDHLVQSEDP) is disordered. Positions 7–16 (TVATNNNDHL) are enriched in polar residues. Cys103 is a binding site for substrate. Zn(2+) is bound by residues His120 and His122. Glu149 serves as the catalytic Proton donor/acceptor. Zn(2+) is bound at residue His205.

Belongs to the aldolase class II family. MtnB subfamily. It depends on Zn(2+) as a cofactor.

Its subcellular location is the cytoplasm. The catalysed reaction is 5-(methylsulfanyl)-D-ribulose 1-phosphate = 5-methylsulfanyl-2,3-dioxopentyl phosphate + H2O. It participates in amino-acid biosynthesis; L-methionine biosynthesis via salvage pathway; L-methionine from S-methyl-5-thio-alpha-D-ribose 1-phosphate: step 2/6. In terms of biological role, catalyzes the dehydration of methylthioribulose-1-phosphate (MTRu-1-P) into 2,3-diketo-5-methylthiopentyl-1-phosphate (DK-MTP-1-P). In Penicillium rubens (strain ATCC 28089 / DSM 1075 / NRRL 1951 / Wisconsin 54-1255) (Penicillium chrysogenum), this protein is Methylthioribulose-1-phosphate dehydratase.